Here is a 448-residue protein sequence, read N- to C-terminus: Exodeoxyribonuclease 7 large subunit (448 aa).

This sequence belongs to the XseA family. As to quaternary structure, heterooligomer composed of large and small subunits.

It is found in the cytoplasm. It carries out the reaction Exonucleolytic cleavage in either 5'- to 3'- or 3'- to 5'-direction to yield nucleoside 5'-phosphates.. Functionally, bidirectionally degrades single-stranded DNA into large acid-insoluble oligonucleotides, which are then degraded further into small acid-soluble oligonucleotides. In Histophilus somni (strain 129Pt) (Haemophilus somnus), this protein is Exodeoxyribonuclease 7 large subunit.